The following is a 365-amino-acid chain: ADP-ribosylhydrolase ARH3 (365 aa).

E42, T77, D78, and D79 together coordinate Mg(2+). D78 contacts substrate. Residues 147-153 (KGSYGNG), H183, L236, and I272 contribute to the substrate site. Mg(2+)-binding residues include D315, D317, and T318.

This sequence belongs to the ADP-ribosylglycohydrolase family. As to quaternary structure, monomer. It depends on Mg(2+) as a cofactor.

The protein localises to the nucleus. The protein resides in the cytoplasm. It localises to the chromosome. Its subcellular location is the mitochondrion matrix. The enzyme catalyses [(1''-&gt;2')-ADP-alpha-D-ribose](n) + H2O = [(1''-&gt;2')-ADP-alpha-D-ribose](n-1) + ADP-D-ribose. It carries out the reaction 1''-O-acetyl-ADP-alpha-D-ribose + H2O = ADP-D-ribose + acetate + H(+). The catalysed reaction is O-(ADP-D-ribosyl)-L-seryl-[protein] + H2O = ADP-D-ribose + L-seryl-[protein]. It catalyses the reaction alpha-NAD(+) + H2O = ADP-D-ribose + nicotinamide + H(+). With respect to regulation, the protein undergoes a dramatic conformational switch from closed to open states upon substrate-binding, which enables specific substrate recognition for the 1''-O-linkage. The glutamate flap (Glu-42) blocks substrate entrance to Mg(2+) in the unliganded closed state. In presence of substrate, Glu-42 is ejected from the active site: this closed-to-open transition significantly widens the substrate-binding channel and precisely positions the scissile 1''-O-linkage for cleavage while securing tightly 2'- and 3'-hydroxyls of ADP-ribose. Its function is as follows. ADP-ribosylhydrolase that preferentially hydrolyzes the scissile alpha-O-linkage attached to the anomeric C1'' position of ADP-ribose and acts on different substrates, such as proteins ADP-ribosylated on serine and threonine, free poly(ADP-ribose) and O-acetyl-ADP-D-ribose. Specifically acts as a serine mono-ADP-ribosylhydrolase by mediating the removal of mono-ADP-ribose attached to serine residues on proteins, thereby playing a key role in DNA damage response. Serine ADP-ribosylation of proteins constitutes the primary form of ADP-ribosylation of proteins in response to DNA damage. Does not hydrolyze ADP-ribosyl-arginine, -cysteine, -diphthamide, or -asparagine bonds. Also able to degrade protein free poly(ADP-ribose), which is synthesized in response to DNA damage: free poly(ADP-ribose) acts as a potent cell death signal and its degradation by ADPRHL2 protects cells from poly(ADP-ribose)-dependent cell death, a process named parthanatos. Also hydrolyzes free poly(ADP-ribose) in mitochondria. Specifically digests O-acetyl-ADP-D-ribose, a product of deacetylation reactions catalyzed by sirtuins. Specifically degrades 1''-O-acetyl-ADP-D-ribose isomer, rather than 2''-O-acetyl-ADP-D-ribose or 3''-O-acetyl-ADP-D-ribose isomers. The protein is ADP-ribosylhydrolase ARH3 (ADPRS) of Bos taurus (Bovine).